The chain runs to 253 residues: Discoidin-1 subunit A (253 aa).

Ser-2 is subject to N-acetylserine. One can recognise an F5/8 type C domain in the interval 2–152 (STQGLVQLLA…ISLRCEFYTQ (151 aa)). Residues 79–81 (RGD) carry the Cell attachment site motif.

In terms of assembly, tetramer of four different chains (A to D). In terms of tissue distribution, stalk cells.

It is found in the cytoplasm. Its function is as follows. Galactose- and N-acetylgalactosamine-binding lectin. May play a role in cell-substratum adhesion rather than in cell-cell adhesion. May be necessary for the maintenance of normal elongate morphology during aggregation. In Dictyostelium discoideum (Social amoeba), this protein is Discoidin-1 subunit A (dscA-1).